The primary structure comprises 50 residues: Cytochrome c-555 (50 aa).

Cysteine 7, cysteine 10, histidine 11, and methionine 25 together coordinate heme.

Post-translationally, binds 1 heme group per subunit.

It localises to the cell membrane. The polypeptide is Cytochrome c-555 (Schinkia azotoformans (Bacillus azotoformans)).